The chain runs to 300 residues: Light-independent protochlorophyllide reductase iron-sulfur ATP-binding protein (300 aa).

ATP contacts are provided by residues 10–15 (GIGKST) and Lys39. Ser14 is a Mg(2+) binding site. [4Fe-4S] cluster contacts are provided by Cys95 and Cys129. ATP is bound at residue 180–181 (NR).

It belongs to the NifH/BchL/ChlL family. As to quaternary structure, homodimer. Protochlorophyllide reductase is composed of three subunits; ChlL, ChlN and ChlB. The cofactor is [4Fe-4S] cluster.

It is found in the plastid. The protein resides in the chloroplast. It catalyses the reaction chlorophyllide a + oxidized 2[4Fe-4S]-[ferredoxin] + 2 ADP + 2 phosphate = protochlorophyllide a + reduced 2[4Fe-4S]-[ferredoxin] + 2 ATP + 2 H2O. Its pathway is porphyrin-containing compound metabolism; chlorophyll biosynthesis (light-independent). Functionally, component of the dark-operative protochlorophyllide reductase (DPOR) that uses Mg-ATP and reduced ferredoxin to reduce ring D of protochlorophyllide (Pchlide) to form chlorophyllide a (Chlide). This reaction is light-independent. The L component serves as a unique electron donor to the NB-component of the complex, and binds Mg-ATP. In Auxenochlorella protothecoides (Green microalga), this protein is Light-independent protochlorophyllide reductase iron-sulfur ATP-binding protein.